We begin with the raw amino-acid sequence, 201 residues long: Recombination protein RecR (201 aa).

A C4-type zinc finger spans residues C60–C75. One can recognise a Toprim domain in the interval A83 to P178.

Belongs to the RecR family.

Functionally, may play a role in DNA repair. It seems to be involved in an RecBC-independent recombinational process of DNA repair. It may act with RecF and RecO. In Brucella ovis (strain ATCC 25840 / 63/290 / NCTC 10512), this protein is Recombination protein RecR.